The chain runs to 407 residues: Protein arginine N-methyltransferase 2 (407 aa).

The RMT2 domain maps to 186-407 (TAADQATYLK…YYYHPEIRFA (222 aa)). Residues Y193, M223, 246–251 (FGMGII), 267–269 (EAH), 294–295 (WQ), and D315 each bind S-adenosyl-L-methionine.

This sequence belongs to the class I-like SAM-binding methyltransferase superfamily. RMT2 methyltransferase family. As to quaternary structure, monomer.

It localises to the cytoplasm. The protein resides in the nucleus. S-adenosyl-L-methionine-dependent protein-arginine N-methyltransferase that methylates the delta-nitrogen atom of arginine residues to form N5-methylarginine (type IV) in target proteins. Monomethylates ribosomal protein L12. The protein is Protein arginine N-methyltransferase 2 of Kluyveromyces lactis (strain ATCC 8585 / CBS 2359 / DSM 70799 / NBRC 1267 / NRRL Y-1140 / WM37) (Yeast).